We begin with the raw amino-acid sequence, 489 residues long: Beta-dihydromenaquinone-9 omega-hydroxylase (489 aa).

Residue C435 participates in heme binding.

It belongs to the cytochrome P450 family. It depends on heme as a cofactor.

The protein localises to the cytoplasm. It carries out the reaction beta-dihydromenaquinone-9 + 2 reduced [2Fe-2S]-[ferredoxin] + O2 + 2 H(+) = omega-hydroxy-beta-dihydromenaquinone-9 + 2 oxidized [2Fe-2S]-[ferredoxin] + H2O. Functionally, involved in the biosynthesis of sulfomenaquinone (SMK, initially named S881 on the basis of its mass), which is localized in the outer envelope of M.bovis and negatively regulates its virulence. Catalyzes the hydroxylation of beta-dihydromenaquinone-9, leading to the formation of omega-hydroxy-beta-dihydromenaquinone-9. This Mycobacterium bovis (strain ATCC BAA-935 / AF2122/97) protein is Beta-dihydromenaquinone-9 omega-hydroxylase (cyp128).